Consider the following 381-residue polypeptide: Protein-glutamate methylesterase/protein-glutamine glutaminase (381 aa).

Residues 20 to 138 (RVMVVDDSVV…EIAAADIFKH (119 aa)) enclose the Response regulatory domain. Asp-71 carries the 4-aspartylphosphate modification. A disordered region spans residues 154–176 (PAALASAREPEPRPIQATPVPAH). The 191-residue stretch at 183–373 (PFSTHAPRAL…PLQQIAPKLV (191 aa)) folds into the CheB-type methylesterase domain. Active-site residues include Ser-197, His-225, and Asp-321.

The protein belongs to the CheB family. Phosphorylated by CheA. Phosphorylation of the N-terminal regulatory domain activates the methylesterase activity.

The protein resides in the cytoplasm. The enzyme catalyses [protein]-L-glutamate 5-O-methyl ester + H2O = L-glutamyl-[protein] + methanol + H(+). It catalyses the reaction L-glutaminyl-[protein] + H2O = L-glutamyl-[protein] + NH4(+). Involved in chemotaxis. Part of a chemotaxis signal transduction system that modulates chemotaxis in response to various stimuli. Catalyzes the demethylation of specific methylglutamate residues introduced into the chemoreceptors (methyl-accepting chemotaxis proteins or MCP) by CheR. Also mediates the irreversible deamidation of specific glutamine residues to glutamic acid. This chain is Protein-glutamate methylesterase/protein-glutamine glutaminase, found in Nitrobacter hamburgensis (strain DSM 10229 / NCIMB 13809 / X14).